A 150-amino-acid polypeptide reads, in one-letter code: Urease accessory protein UreE (150 aa).

Belongs to the UreE family.

The protein resides in the cytoplasm. Involved in urease metallocenter assembly. Binds nickel. Probably functions as a nickel donor during metallocenter assembly. The chain is Urease accessory protein UreE from Staphylococcus epidermidis (strain ATCC 35984 / DSM 28319 / BCRC 17069 / CCUG 31568 / BM 3577 / RP62A).